Here is a 63-residue protein sequence, read N- to C-terminus: Large ribosomal subunit protein uL29 (63 aa).

The protein belongs to the universal ribosomal protein uL29 family.

In Edwardsiella ictaluri (strain 93-146), this protein is Large ribosomal subunit protein uL29.